Here is a 33-residue protein sequence, read N- to C-terminus: MGSVIKKRRKRMSKKKHRKLLRRTRVQRRKLGK.

The disordered stretch occupies residues 1–33; the sequence is MGSVIKKRRKRMSKKKHRKLLRRTRVQRRKLGK.

This is an uncharacterized protein from Mycobacterium tuberculosis (strain CDC 1551 / Oshkosh).